Consider the following 304-residue polypeptide: MSFINKYVIVVVGPTAAGKTALAVSLAKRFNTAVLSADSRQVFKELSIGTAKATMEEQDGVPHYFVDSISIEESFNAGMFEREGLQLLDTLFLKHDVVIVCGGTGLYVKALLEGMDALPQADPELREALNREFEQRGLEVMTGELKEIDPETHAVIDLKNPLRVFRAIEVYRQTGKPLSSFKTGAKQERPFKTIRIGLNMPREELYARIDRRMDRMLEAGLEKEARDNIQYRNYNALQTVGYSEIFGFIDGLYDREEMIRLLKRNSRRYAKRQLTWFSKDAEVKWFHPGEITEITTFIEAKLQE.

13 to 20 (GPTAAGKT) contributes to the ATP binding site. Substrate is bound at residue 15–20 (TAAGKT). Residues 38–41 (DSRQ) are interaction with substrate tRNA.

This sequence belongs to the IPP transferase family. As to quaternary structure, monomer. Mg(2+) is required as a cofactor.

It carries out the reaction adenosine(37) in tRNA + dimethylallyl diphosphate = N(6)-dimethylallyladenosine(37) in tRNA + diphosphate. In terms of biological role, catalyzes the transfer of a dimethylallyl group onto the adenine at position 37 in tRNAs that read codons beginning with uridine, leading to the formation of N6-(dimethylallyl)adenosine (i(6)A). This Cytophaga hutchinsonii (strain ATCC 33406 / DSM 1761 / CIP 103989 / NBRC 15051 / NCIMB 9469 / D465) protein is tRNA dimethylallyltransferase.